The primary structure comprises 343 residues: Probable dual-specificity RNA methyltransferase RlmN (343 aa).

Residue E90 is the Proton acceptor of the active site. One can recognise a Radical SAM core domain in the interval H96 to D325. C103 and C330 are joined by a disulfide. 3 residues coordinate [4Fe-4S] cluster: C110, C114, and C117. Residues G157–E158, S189, S212–H214, and N288 contribute to the S-adenosyl-L-methionine site. C330 (S-methylcysteine intermediate) is an active-site residue.

Belongs to the radical SAM superfamily. RlmN family. [4Fe-4S] cluster serves as cofactor.

It localises to the cytoplasm. It carries out the reaction adenosine(2503) in 23S rRNA + 2 reduced [2Fe-2S]-[ferredoxin] + 2 S-adenosyl-L-methionine = 2-methyladenosine(2503) in 23S rRNA + 5'-deoxyadenosine + L-methionine + 2 oxidized [2Fe-2S]-[ferredoxin] + S-adenosyl-L-homocysteine. The catalysed reaction is adenosine(37) in tRNA + 2 reduced [2Fe-2S]-[ferredoxin] + 2 S-adenosyl-L-methionine = 2-methyladenosine(37) in tRNA + 5'-deoxyadenosine + L-methionine + 2 oxidized [2Fe-2S]-[ferredoxin] + S-adenosyl-L-homocysteine. Its function is as follows. Specifically methylates position 2 of adenine 2503 in 23S rRNA and position 2 of adenine 37 in tRNAs. This chain is Probable dual-specificity RNA methyltransferase RlmN, found in Pseudothermotoga lettingae (strain ATCC BAA-301 / DSM 14385 / NBRC 107922 / TMO) (Thermotoga lettingae).